We begin with the raw amino-acid sequence, 455 residues long: Dihydrolipoyllysine-residue succinyltransferase component of 2-oxoglutarate dehydrogenase complex, mitochondrial (455 aa).

Residues 1 to 68 constitute a mitochondrion transit peptide; it reads MLSRSRCVSR…RFFRTTAVCK (68 aa). Positions 71-145 constitute a Lipoyl-binding domain; it reads VITVKTPAFA…EGGTPLFTLR (75 aa). Serine 82 carries the phosphoserine modification. Residue lysine 111 is modified to N6-lipoyllysine. The segment covering 153 to 173 has biased composition (low complexity); sequence KAKPAEAPAAAAPKAEPAVSA. Residues 153–214 are disordered; the sequence is KAKPAEAPAA…KPTAAPPVAE (62 aa). Residue lysine 155 is modified to N6-acetyllysine. Pro residues predominate over residues 174-195; sequence VPPPPAASIPTQMPPVPSPPQP. The catalytic stretch occupies residues 221–453; sequence LRAEHREKMN…AVEDPRVLLL (233 aa). Residues lysine 269, lysine 274, lysine 275, lysine 279, and lysine 309 each carry the N6-acetyllysine modification. Active-site residues include histidine 426 and aspartate 430.

The protein belongs to the 2-oxoacid dehydrogenase family. The 2-oxoglutarate dehydrogenase complex is composed of OGDH (2-oxoglutarate dehydrogenase; E1), DLST (dihydrolipoamide succinyltransferase; E2), DLD (dihydrolipoamide dehydrogenase; E3) and the assembly factor KGD4. It contains multiple copies of the three enzymatic components (E1, E2 and E3). In the nucleus, the 2-oxoglutarate dehydrogenase complex associates with KAT2A. Interacts with ABHD11; this interaction maintains the functional lipoylation of the 2-oxoglutarate dehydrogenase complex. (R)-lipoate serves as cofactor.

It localises to the mitochondrion matrix. It is found in the nucleus. It catalyses the reaction N(6)-[(R)-dihydrolipoyl]-L-lysyl-[protein] + succinyl-CoA = N(6)-[(R)-S(8)-succinyldihydrolipoyl]-L-lysyl-[protein] + CoA. It participates in amino-acid degradation; L-lysine degradation via saccharopine pathway; glutaryl-CoA from L-lysine: step 6/6. It functions in the pathway carbohydrate metabolism; tricarboxylic acid cycle. Functionally, dihydrolipoamide succinyltransferase (E2) component of the 2-oxoglutarate dehydrogenase complex. The 2-oxoglutarate dehydrogenase complex catalyzes the overall conversion of 2-oxoglutarate to succinyl-CoA and CO(2). The 2-oxoglutarate dehydrogenase complex is mainly active in the mitochondrion. A fraction of the 2-oxoglutarate dehydrogenase complex also localizes in the nucleus and is required for lysine succinylation of histones: associates with KAT2A on chromatin and provides succinyl-CoA to histone succinyltransferase KAT2A. The protein is Dihydrolipoyllysine-residue succinyltransferase component of 2-oxoglutarate dehydrogenase complex, mitochondrial of Sus scrofa (Pig).